Reading from the N-terminus, the 1938-residue chain is Histone-lysine N-methyltransferase SETD1B (1938 aa).

Positions 1–20 (MSFKEAKPGERGKNPEDHGR) are enriched in basic and acidic residues. A disordered region spans residues 1-44 (MSFKEAKPGERGKNPEDHGRKQAASWMNGMEAANQPSTSAEKKS). In terms of domain architecture, RRM spans 111-199 (DEFYVGPVPP…NIIHAELDTK (89 aa)). Disordered stretches follow at residues 226–357 (LDAS…ENTF), 369–484 (FPRT…TRIA), 496–630 (LISS…EVTP), 652–688 (GFPPLPPPPPPQSGFPMPPPLPPPPPPTHPSVTVPPP), 916–1125 (KEPP…SSPV), 1147–1174 (HQTAQDTSHLRKKDLDVPLVESKEHKQD), 1187–1206 (MQQNVFKEHEKAPSPMNEEE), 1327–1373 (KTLS…GNSL), 1413–1468 (FPES…VPHM), 1496–1528 (ECEFTKGQLPSTDESAPSPPFPPTDKRKGPKKP), and 1744–1772 (DEPPIDTQGKSIPAQPQASTRAGSERRSE). Polar residues-rich tracts occupy residues 254-290 (VTPNSSTPFSHDTAYSSSRQGTPNSYSQFTPQSQGTP), 298-312 (PFSQDSSYSSRQTTP), 375-407 (LSHSSGNNKSAFSPYQGSTVFPQTDDNQYPQTS), and 446-457 (DSTTEQKASFAQ). Low complexity predominate over residues 512-531 (SPISSSSSQLSPIPPYSSSS). Composition is skewed to polar residues over residues 532 to 546 (HYQDVTPSSRPSSTG) and 569 to 585 (SLCQNSRSASPIDQINQ). Residues 588-599 (RKMETLDNKELV) are compositionally biased toward basic and acidic residues. The span at 619 to 628 (EDMEISDDEV) shows a compositional bias: acidic residues. 2 stretches are compositionally biased toward acidic residues: residues 976-990 (SEGEEEVESEGDDGE) and 1054-1114 (DSSD…EDFF). Residues 1159 to 1174 (KDLDVPLVESKEHKQD) are compositionally biased toward basic and acidic residues. A compositionally biased stretch (basic and acidic residues) spans 1329–1343 (LSEEELPRTPGRDIL). Composition is skewed to polar residues over residues 1349-1358 (LGKSQSTETI) and 1441-1453 (EPTSASLTMNSVP). Over residues 1454–1464 (SPIPFASPPRG) the composition is skewed to pro residues. Residues 1751–1765 (QGKSIPAQPQASTRA) show a composition bias toward polar residues. The RxxxRR motif signature appears at 1770 to 1775 (RSEQRR). In terms of domain architecture, SET spans 1799–1916 (KKIRFCKSHI…VNEEITYDYK (118 aa)). Residue Tyr1915 coordinates S-adenosyl-L-methionine. Residues 1922 to 1938 (VKIPCLCGAENCRGTLN) form the Post-SET domain.

The protein belongs to the class V-like SAM-binding methyltransferase superfamily. Component of the SET1B/COMPASS complex.

The protein localises to the nucleus speckle. The protein resides in the chromosome. It catalyses the reaction L-lysyl(4)-[histone H3] + 3 S-adenosyl-L-methionine = N(6),N(6),N(6)-trimethyl-L-lysyl(4)-[histone H3] + 3 S-adenosyl-L-homocysteine + 3 H(+). Histone methyltransferase that specifically methylates 'Lys-4' of histone H3, when part of the SET1 histone methyltransferase (HMT) complex, but not if the neighboring 'Lys-9' residue is already methylated. H3 'Lys-4' methylation represents a specific tag for epigenetic transcriptional activation. The polypeptide is Histone-lysine N-methyltransferase SETD1B (setd1b) (Xenopus laevis (African clawed frog)).